A 1070-amino-acid polypeptide reads, in one-letter code: Inactive tyrosine-protein kinase 7 (1070 aa).

The N-terminal stretch at Met-1–Thr-30 is a signal peptide. 7 consecutive Ig-like C2-type domains span residues Ala-31–Asn-120, Pro-128–Ser-218, Ala-225–Leu-317, Pro-309–Thr-407, Pro-412–Gln-497, Lys-503–Leu-586, and Gly-578–Tyr-680. The Extracellular portion of the chain corresponds to Ala-31–Thr-704. The cysteines at positions 53 and 101 are disulfide-linked. Residues Asn-116, Asn-175, Asn-184, Asn-214, Asn-268, and Asn-283 are each glycosylated (N-linked (GlcNAc...) asparagine). An intrachain disulfide couples Cys-150 to Cys-200. 2 disulfides stabilise this stretch: Cys-246/Cys-301 and Cys-343/Cys-391. Asn-405, Asn-463, Asn-567, and Asn-646 each carry an N-linked (GlcNAc...) asparagine glycan. 3 disulfides stabilise this stretch: Cys-433-Cys-481, Cys-524-Cys-570, and Cys-613-Cys-664. Residues Ile-705–Tyr-725 form a helical membrane-spanning segment. Over Cys-726–Pro-1070 the chain is Cytoplasmic. 2 disordered regions span residues Gln-736–Pro-759 and Gly-773–Arg-793. Residues Ser-794 to Pro-1070 are interaction with CTNNB1. One can recognise a Protein kinase; inactive domain in the interval Leu-796–Val-1066. Ser-1064 carries the phosphoserine modification.

This sequence belongs to the protein kinase superfamily. Tyr protein kinase family. Insulin receptor subfamily. Interacts with CTNNB1. In terms of processing, MMP14 cleaves PTK7 between Pro-621 and Leu-622 generating an N-terminal soluble (70 kDa) fragment and a membrane C-terminal (50 kDa) fragment. Proteolysis by MMP14 regulates PTK7 function in non-canonical Wnt signaling pathway. In terms of tissue distribution, highly expressed in lung, liver, pancreas, kidney, placenta and melanocytes. Weakly expressed in thyroid gland, ovary, brain, heart and skeletal muscle. Also expressed in erythroleukemia cells. But not expressed in colon.

It is found in the membrane. It localises to the cell junction. Functionally, inactive tyrosine kinase involved in Wnt signaling pathway. Component of both the non-canonical (also known as the Wnt/planar cell polarity signaling) and the canonical Wnt signaling pathway. Functions in cell adhesion, cell migration, cell polarity, proliferation, actin cytoskeleton reorganization and apoptosis. Has a role in embryogenesis, epithelial tissue organization and angiogenesis. This chain is Inactive tyrosine-protein kinase 7 (PTK7), found in Homo sapiens (Human).